A 542-amino-acid polypeptide reads, in one-letter code: NAD-dependent deacetylase sir2D (542 aa).

2 disordered regions span residues 1–37 (MNKR…NTPL) and 136–160 (ETST…TTTT). Over residues 8 to 25 (NNELNEIQNNQNKNNNNK) the composition is skewed to low complexity. Positions 165–193 (NETILLDILNNNKDEVDDEIQRIGNNVGN) form a coiled coil. Residues 283–542 (ATLDLSTFEK…VQDLLNKVKW (260 aa)) enclose the Deacetylase sirtuin-type domain. The Proton acceptor role is filled by H411. C419, C422, C443, and C446 together coordinate Zn(2+).

The protein belongs to the sirtuin family. It depends on Zn(2+) as a cofactor.

The enzyme catalyses N(6)-acetyl-L-lysyl-[protein] + NAD(+) + H2O = 2''-O-acetyl-ADP-D-ribose + nicotinamide + L-lysyl-[protein]. Its function is as follows. NAD-dependent deacetylase, which plays an important role in the regulation of transcriptional repression. The polypeptide is NAD-dependent deacetylase sir2D (sir2D) (Dictyostelium discoideum (Social amoeba)).